The following is a 388-amino-acid chain: Chorismate synthase (388 aa).

2 residues coordinate NADP(+): arginine 39 and arginine 45. Residues 130-132 (RSS), 251-252 (NA), glycine 296, 311-315 (KPIPT), and arginine 337 each bind FMN.

It belongs to the chorismate synthase family. As to quaternary structure, homotetramer. Requires FMNH2 as cofactor.

It catalyses the reaction 5-O-(1-carboxyvinyl)-3-phosphoshikimate = chorismate + phosphate. Its pathway is metabolic intermediate biosynthesis; chorismate biosynthesis; chorismate from D-erythrose 4-phosphate and phosphoenolpyruvate: step 7/7. Catalyzes the anti-1,4-elimination of the C-3 phosphate and the C-6 proR hydrogen from 5-enolpyruvylshikimate-3-phosphate (EPSP) to yield chorismate, which is the branch point compound that serves as the starting substrate for the three terminal pathways of aromatic amino acid biosynthesis. This reaction introduces a second double bond into the aromatic ring system. The protein is Chorismate synthase of Geobacillus kaustophilus (strain HTA426).